The sequence spans 64 residues: Large ribosomal subunit protein bL35 (64 aa).

Basic residues predominate over residues 1–14 (MKQKTHKGTAKRIK). Residues 1–48 (MKQKTHKGTAKRIKVTGSGKLRREQANRRHLLEGKPSKRTRRLKGTED) are disordered. Over residues 21–36 (LRREQANRRHLLEGKP) the composition is skewed to basic and acidic residues.

It belongs to the bacterial ribosomal protein bL35 family.

The sequence is that of Large ribosomal subunit protein bL35 from Corynebacterium aurimucosum (strain ATCC 700975 / DSM 44827 / CIP 107346 / CN-1) (Corynebacterium nigricans).